Reading from the N-terminus, the 358-residue chain is Putative UDP-kanosamine synthase oxidoreductase subunit (358 aa).

Interacts with RifK.

It catalyses the reaction UDP-alpha-D-glucose + NAD(+) = UDP-3-oxo-alpha-D-glucose + NADH + H(+). The protein operates within antibiotic biosynthesis; rifamycin B biosynthesis. In a complex with RifK, RifL may catalyze the oxidation of UDP-glucose to UDP-3-keto-D-glucose, which would then be used by RifK to produce UDP-kanosamine. Is not able to use dTDP-glucose as substrate. The polypeptide is Putative UDP-kanosamine synthase oxidoreductase subunit (rifL) (Amycolatopsis mediterranei (strain S699) (Nocardia mediterranei)).